Consider the following 307-residue polypeptide: Aspartate carbamoyltransferase catalytic subunit (307 aa).

The carbamoyl phosphate site is built by Arg59 and Thr60. Lys87 serves as a coordination point for L-aspartate. Residues Arg109, His139, and Gln142 each contribute to the carbamoyl phosphate site. L-aspartate contacts are provided by Arg172 and Arg224. 2 residues coordinate carbamoyl phosphate: Ala265 and Pro266.

This sequence belongs to the aspartate/ornithine carbamoyltransferase superfamily. ATCase family. As to quaternary structure, heterododecamer (2C3:3R2) of six catalytic PyrB chains organized as two trimers (C3), and six regulatory PyrI chains organized as three dimers (R2).

It catalyses the reaction carbamoyl phosphate + L-aspartate = N-carbamoyl-L-aspartate + phosphate + H(+). It participates in pyrimidine metabolism; UMP biosynthesis via de novo pathway; (S)-dihydroorotate from bicarbonate: step 2/3. Functionally, catalyzes the condensation of carbamoyl phosphate and aspartate to form carbamoyl aspartate and inorganic phosphate, the committed step in the de novo pyrimidine nucleotide biosynthesis pathway. The chain is Aspartate carbamoyltransferase catalytic subunit from Streptococcus agalactiae serotype Ia (strain ATCC 27591 / A909 / CDC SS700).